Here is a 449-residue protein sequence, read N- to C-terminus: Tubulin beta chain (449 aa).

Gln-11, Glu-71, Ser-140, Gly-144, Thr-145, Gly-146, Asn-206, and Asn-228 together coordinate GTP. Glu-71 contributes to the Mg(2+) binding site.

Belongs to the tubulin family. Dimer of alpha and beta chains. A typical microtubule is a hollow water-filled tube with an outer diameter of 25 nm and an inner diameter of 15 nM. Alpha-beta heterodimers associate head-to-tail to form protofilaments running lengthwise along the microtubule wall with the beta-tubulin subunit facing the microtubule plus end conferring a structural polarity. Microtubules usually have 13 protofilaments but different protofilament numbers can be found in some organisms and specialized cells. Mg(2+) is required as a cofactor.

It is found in the cytoplasm. It localises to the cytoskeleton. In terms of biological role, tubulin is the major constituent of microtubules, a cylinder consisting of laterally associated linear protofilaments composed of alpha- and beta-tubulin heterodimers. Microtubules grow by the addition of GTP-tubulin dimers to the microtubule end, where a stabilizing cap forms. Below the cap, tubulin dimers are in GDP-bound state, owing to GTPase activity of alpha-tubulin. The polypeptide is Tubulin beta chain (TUBB) (Cicer arietinum (Chickpea)).